We begin with the raw amino-acid sequence, 85 residues long: U4-theraphotoxin-Hhn1a (85 aa).

The N-terminal stretch at 1-22 (MKVTLIAILTCAAVLVLHTTAA) is a signal peptide. A propeptide spanning residues 23–48 (EELEAESQLMEVGMPDTELAAVDEER) is cleaved from the precursor. 3 disulfide bridges follow: C52–C66, C56–C77, and C71–C82.

Belongs to the neurotoxin 12 (Hwtx-2) family. 02 (Hwtx-2) subfamily. Monomer. As to expression, expressed by the venom gland.

The protein localises to the secreted. Its function is as follows. Neurotoxin active on both insects and mammals. The chain is U4-theraphotoxin-Hhn1a from Cyriopagopus hainanus (Chinese bird spider).